The following is an 88-amino-acid chain: HssA/B-like protein 17 (88 aa).

Belongs to the hssA/B family.

The protein is HssA/B-like protein 17 (hssl17) of Dictyostelium discoideum (Social amoeba).